Consider the following 513-residue polypeptide: MQLNPSEISELLKSRIEGLGASTDVRTQGTVVSVTDGITRIHGLSDVMQGEMLEFPNNVFGLALNLERDSVGAVILGDYTGVSEGDQVKTTGRILEVPVGPELRGRVVNTLGLPIDGKGPINTKETDIIEKVAPGVIARRSVSQPLQTGIKAIDSMVPIGRGQRELIIGDRQTGKTAVAVDTIISQKGKGVTCVYVAIGQKASTINNVVRKLEEHGAMEYTIVVAASASDSAAMQYLAAYAGCTMGEYFRDRGEDALIIYDDLTKQAWAYRQVSLLLRRPPGREAYPGDVFYLHSRLLERAARVNEEYVEKFTNGAVKGKTGSLTALPIIETQAGDVSAFVPTNVISITDGQIFLETDLFNAGVRPAINAGISVSRVGGAAQTKVVKKLSGGIRTDLAQYRELAAFAQFASDLDDATRRQLERGKRVVELLKQPQYQPLQVWELAVSLYTVNNGYLDDVDVAQVLSFEKSLKDQLKAKHAALIQRIEDTKELSKDDEAELAAAVQDFKKHGAF.

169-176 (GDRQTGKT) is a binding site for ATP.

Belongs to the ATPase alpha/beta chains family. As to quaternary structure, F-type ATPases have 2 components, CF(1) - the catalytic core - and CF(0) - the membrane proton channel. CF(1) has five subunits: alpha(3), beta(3), gamma(1), delta(1), epsilon(1). CF(0) has three main subunits: a(1), b(2) and c(9-12). The alpha and beta chains form an alternating ring which encloses part of the gamma chain. CF(1) is attached to CF(0) by a central stalk formed by the gamma and epsilon chains, while a peripheral stalk is formed by the delta and b chains.

It is found in the cell inner membrane. It carries out the reaction ATP + H2O + 4 H(+)(in) = ADP + phosphate + 5 H(+)(out). In terms of biological role, produces ATP from ADP in the presence of a proton gradient across the membrane. The alpha chain is a regulatory subunit. The chain is ATP synthase subunit alpha from Bordetella avium (strain 197N).